Consider the following 688-residue polypeptide: Complement C1s-1 subcomponent (688 aa).

The N-terminal stretch at 1-15 (MWCLVLFSLLASFSA) is a signal peptide. The region spanning 16-130 (EPTMHGEILS…TGFAAYYTAI (115 aa)) is the CUB 1 domain. Glutamate 60, aspartate 68, aspartate 113, aspartate 131, isoleucine 132, and glutamate 134 together coordinate Ca(2+). Cysteine 65 and cysteine 83 are joined by a disulfide. The region spanning 131 to 172 (DINECTDFTDVPCSHFCNNFIGGYFCSCPPEYFLHDDMRNCG) is the EGF-like; calcium-binding domain. Cystine bridges form between cysteine 135/cysteine 147, cysteine 143/cysteine 156, and cysteine 158/cysteine 171. Residues asparagine 149, phenylalanine 150, and glycine 153 each contribute to the Ca(2+) site. Asparagine 149 carries the post-translational modification (3R)-3-hydroxyasparagine. N-linked (GlcNAc...) asparagine glycosylation is present at asparagine 174. Cysteine 175 and cysteine 202 are oxidised to a cystine. In terms of domain architecture, CUB 2 spans 175-290 (CSGDVFTALI…KGWKLRYHGD (116 aa)). Ca(2+) contacts are provided by glutamate 226, aspartate 236, aspartate 275, glycine 278, and glutamine 279. An intrachain disulfide couples cysteine 234 to cysteine 251. Sushi domains follow at residues 292-356 (ISCA…KCQP) and 357-423 (VYCG…RCIP). 7 cysteine pairs are disulfide-bonded: cysteine 294–cysteine 341, cysteine 321–cysteine 354, cysteine 359–cysteine 403, cysteine 386–cysteine 421, cysteine 425–cysteine 549, cysteine 595–cysteine 618, and cysteine 627–cysteine 659. One can recognise a Peptidase S1 domain in the interval 438-680 (IFGGQPAKIE…YVDWILKTMQ (243 aa)). Residues histidine 475 and aspartate 529 each act as charge relay system in the active site. Serine 631 serves as the catalytic Charge relay system. Asparagine 641 carries an N-linked (GlcNAc...) asparagine glycan.

It belongs to the peptidase S1 family. As to quaternary structure, core component of the complement C1 complex, a calcium-dependent complex composed of 1 molecule of the C1Q subcomplex, 2 molecules of C1R and 2 molecules of C1S. The C1Q subcomplex is composed 18 subunits: 3 chains of C1QA, C1QB, and C1QC trimerize to form 6 collagen-like triple helices connected to six globular ligand-recognition modules. Cleaved and activated by C1R to generate Complement C1s subcomponent heavy and light chains. In terms of processing, the iron and 2-oxoglutarate dependent 3-hydroxylation of aspartate and asparagine is (R) stereospecific within EGF domains. In terms of tissue distribution, predominantly expressed in liver.

It localises to the secreted. Its subcellular location is the cell surface. The enzyme catalyses Cleavage of Arg-|-Ala bond in complement component C4 to form C4a and C4b, and Lys(or Arg)-|-Lys bond in complement component C2 to form C2a and C2b: the 'classical' pathway C3 convertase.. Its activity is regulated as follows. Cleaved and activated by C1R. Immunoglobulin-binding promotes autoactivation of C1R, which results in the cleavage of the Arg-Ile bond in the catalytic domain. Inhibited by C1 inhibitor (SERPING1). Its function is as follows. Component of the complement C1 complex, a multiprotein complex that initiates the classical pathway of the complement system, a cascade of proteins that leads to phagocytosis and breakdown of pathogens and signaling that strengthens the adaptive immune system. C1S is activated following association of the C1 complex with immunoglobulins (IgG or IgM) complexed with antigens to form antigen-antibody complexes on the surface of pathogens. C1S is cleaved and activated by C1R to generate C1s subcomponent heavy and light chains. C1s subcomponent light chain then cleaves and activates C2 and C4, the next components of the classical complement pathway. In terms of biological role, serine protease component of the complement C1 complex, which catalyzes cleavage and activation of C2 and C4, the next components of the classical complement pathway. Also cleaves IGFBP5 and thereby inhibits the trophic effects of IGF1. This chain is Complement C1s-1 subcomponent, found in Mus musculus (Mouse).